A 434-amino-acid polypeptide reads, in one-letter code: UDP-N-acetylglucosamine 1-carboxyvinyltransferase (434 aa).

Phosphoenolpyruvate is bound at residue 22 to 23 (KN). R99 is a UDP-N-acetyl-alpha-D-glucosamine binding site. C123 acts as the Proton donor in catalysis. C123 carries the post-translational modification 2-(S-cysteinyl)pyruvic acid O-phosphothioketal. UDP-N-acetyl-alpha-D-glucosamine contacts are provided by residues 128 to 132 (RPVDQ), D317, and I339.

This sequence belongs to the EPSP synthase family. MurA subfamily.

The protein localises to the cytoplasm. It catalyses the reaction phosphoenolpyruvate + UDP-N-acetyl-alpha-D-glucosamine = UDP-N-acetyl-3-O-(1-carboxyvinyl)-alpha-D-glucosamine + phosphate. It functions in the pathway cell wall biogenesis; peptidoglycan biosynthesis. Cell wall formation. Adds enolpyruvyl to UDP-N-acetylglucosamine. This chain is UDP-N-acetylglucosamine 1-carboxyvinyltransferase, found in Paracidovorax citrulli (strain AAC00-1) (Acidovorax citrulli).